The chain runs to 504 residues: Protoporphyrinogen oxidase, mitochondrial (504 aa).

FAD contacts are provided by residues 20–25, 43–44, lysine 51, and 65–68; these read GAGVSG, EA, and GANT. The segment at 213 to 232 is disordered; sequence SPKNEKKQGPPKTSANKKRQ. Residues valine 264 and 473-475 contribute to the FAD site; that span reads LSV.

This sequence belongs to the protoporphyrinogen/coproporphyrinogen oxidase family. Protoporphyrinogen oxidase subfamily. The cofactor is FAD.

It localises to the mitochondrion. The catalysed reaction is protoporphyrinogen IX + 3 O2 = protoporphyrin IX + 3 H2O2. The protein operates within porphyrin-containing compound metabolism; protoporphyrin-IX biosynthesis; protoporphyrin-IX from protoporphyrinogen-IX: step 1/1. Its activity is regulated as follows. Inhibited by the herbicide acifluorfen. Its function is as follows. Catalyzes the 6-electron oxidation of protoporphyrinogen-IX to form protoporphyrin-IX. In terms of biological role, provides precursor for the mitochondrial and plastidic heme synthesis and the predominant chlorophyll synthesis in plastids. This Nicotiana tabacum (Common tobacco) protein is Protoporphyrinogen oxidase, mitochondrial (PPXII).